Reading from the N-terminus, the 243-residue chain is NAD-dependent protein deacylase (243 aa).

The Deacetylase sirtuin-type domain occupies 1–234; it reads MYQHIVVLTG…PKLVDTILAG (234 aa). 10-29 serves as a coordination point for NAD(+); that stretch reads GAGISAESGLRTFRDQDGLW. Residues Tyr54 and Arg57 each coordinate substrate. 91 to 94 contributes to the NAD(+) binding site; the sequence is QNID. His109 acts as the Proton acceptor in catalysis. Cys117 and Cys136 together coordinate Zn(2+). Residues 176-178, 202-204, and Ala220 contribute to the NAD(+) site; these read GTS and NLQ.

The protein belongs to the sirtuin family. Class III subfamily. The cofactor is Zn(2+).

It localises to the cytoplasm. The enzyme catalyses N(6)-acetyl-L-lysyl-[protein] + NAD(+) + H2O = 2''-O-acetyl-ADP-D-ribose + nicotinamide + L-lysyl-[protein]. It carries out the reaction N(6)-succinyl-L-lysyl-[protein] + NAD(+) + H2O = 2''-O-succinyl-ADP-D-ribose + nicotinamide + L-lysyl-[protein]. Functionally, NAD-dependent lysine deacetylase and desuccinylase that specifically removes acetyl and succinyl groups on target proteins. Modulates the activities of several proteins which are inactive in their acylated form. The chain is NAD-dependent protein deacylase from Shewanella oneidensis (strain ATCC 700550 / JCM 31522 / CIP 106686 / LMG 19005 / NCIMB 14063 / MR-1).